The chain runs to 427 residues: Enolase 2 (427 aa).

A (2R)-2-phosphoglycerate-binding site is contributed by Q165. Catalysis depends on E207, which acts as the Proton donor. Residues D244, E287, and D314 each contribute to the Mg(2+) site. (2R)-2-phosphoglycerate contacts are provided by K339, R368, S369, and K390. K339 acts as the Proton acceptor in catalysis.

It belongs to the enolase family. Component of the RNA degradosome, a multiprotein complex involved in RNA processing and mRNA degradation. It depends on Mg(2+) as a cofactor.

Its subcellular location is the cytoplasm. The protein localises to the secreted. It is found in the cell surface. The catalysed reaction is (2R)-2-phosphoglycerate = phosphoenolpyruvate + H2O. It participates in carbohydrate degradation; glycolysis; pyruvate from D-glyceraldehyde 3-phosphate: step 4/5. Its function is as follows. Catalyzes the reversible conversion of 2-phosphoglycerate (2-PG) into phosphoenolpyruvate (PEP). It is essential for the degradation of carbohydrates via glycolysis. This Pseudomonas syringae pv. tomato (strain ATCC BAA-871 / DC3000) protein is Enolase 2.